Consider the following 620-residue polypeptide: Arginine--tRNA ligase (620 aa).

The short motif at alanine 147 to glycine 157 is the 'HIGH' region element.

Belongs to the class-I aminoacyl-tRNA synthetase family. Monomer.

The protein resides in the cytoplasm. The enzyme catalyses tRNA(Arg) + L-arginine + ATP = L-arginyl-tRNA(Arg) + AMP + diphosphate. This is Arginine--tRNA ligase from Bifidobacterium longum (strain DJO10A).